We begin with the raw amino-acid sequence, 214 residues long: Probable transaldolase (214 aa).

The active-site Schiff-base intermediate with substrate is lysine 83.

The protein belongs to the transaldolase family. Type 3B subfamily.

The protein resides in the cytoplasm. It carries out the reaction D-sedoheptulose 7-phosphate + D-glyceraldehyde 3-phosphate = D-erythrose 4-phosphate + beta-D-fructose 6-phosphate. It functions in the pathway carbohydrate degradation; pentose phosphate pathway; D-glyceraldehyde 3-phosphate and beta-D-fructose 6-phosphate from D-ribose 5-phosphate and D-xylulose 5-phosphate (non-oxidative stage): step 2/3. Transaldolase is important for the balance of metabolites in the pentose-phosphate pathway. This Dictyoglomus turgidum (strain DSM 6724 / Z-1310) protein is Probable transaldolase.